The chain runs to 474 residues: L-arabinose isomerase (474 aa).

Residues glutamate 306, glutamate 331, histidine 348, and histidine 447 each coordinate Mn(2+).

It belongs to the arabinose isomerase family. Mn(2+) serves as cofactor.

The catalysed reaction is beta-L-arabinopyranose = L-ribulose. It participates in carbohydrate degradation; L-arabinose degradation via L-ribulose; D-xylulose 5-phosphate from L-arabinose (bacterial route): step 1/3. In terms of biological role, catalyzes the conversion of L-arabinose to L-ribulose. The protein is L-arabinose isomerase of Oceanobacillus iheyensis (strain DSM 14371 / CIP 107618 / JCM 11309 / KCTC 3954 / HTE831).